A 393-amino-acid chain; its full sequence is Acyltransferase ato1 (393 aa).

Belongs to the lysine N-acyltransferase mbtK family.

Its pathway is siderophore biosynthesis; ferrichrome biosynthesis. Its function is as follows. L-ornithine N(5)-monooxygenase; part of the siderophore biosynthetic pathway. Omphalotus olearius produces ferrichrome A, but no other siderophore has been detected. Ferrichrome A consists of a hexapeptide ring made up of one glycine, two serine, and three N(5)-hydroxyornithine amino acid residues, the latter acylated by trans-(alpha-methyl)-glutaconic acid residues. The biosynthesis of ferrichrome A depends on the hydroxylation of ornithine to N(5)-hydroxyornithine, catalyzed by the monooxygenase omo1. The second step, the acylation of N(5)-hydroxy-L-ornithine is probably catalyzed by the N-acyltransferase ato1. Finally, assembly of ferrichrome A is catalyzed by the nonribosomal peptide synthase (NRPS) fso1. The sequence is that of Acyltransferase ato1 from Omphalotus olearius (Jack o'lantern).